Consider the following 717-residue polypeptide: Copine family protein 5 (717 aa).

A C2 domain is found at 193–318 (YLGGIIVSAE…KYGPGSDNVY (126 aa)). In terms of domain architecture, VWFA spans 377 to 567 (ELDQRRFDGE…LNKSRIAETA (191 aa)).

Belongs to the copine family.

In Caenorhabditis elegans, this protein is Copine family protein 5 (cpna-5).